A 130-amino-acid chain; its full sequence is Iron-sulfur cluster insertion protein ErpA (130 aa).

3 residues coordinate iron-sulfur cluster: Cys46, Cys116, and Cys118.

Belongs to the HesB/IscA family. In terms of assembly, homodimer. Iron-sulfur cluster is required as a cofactor.

Functionally, required for insertion of 4Fe-4S clusters for at least IspG. The chain is Iron-sulfur cluster insertion protein ErpA from Legionella pneumophila subsp. pneumophila (strain Philadelphia 1 / ATCC 33152 / DSM 7513).